The following is a 505-amino-acid chain: ATP synthase subunit alpha (505 aa).

170-177 (GDRQTGKT) serves as a coordination point for ATP.

Belongs to the ATPase alpha/beta chains family. As to quaternary structure, F-type ATPases have 2 components, CF(1) - the catalytic core - and CF(0) - the membrane proton channel. CF(1) has five subunits: alpha(3), beta(3), gamma(1), delta(1), epsilon(1). CF(0) has four main subunits: a, b, b' and c.

The protein localises to the cellular thylakoid membrane. It catalyses the reaction ATP + H2O + 4 H(+)(in) = ADP + phosphate + 5 H(+)(out). Produces ATP from ADP in the presence of a proton gradient across the membrane. The alpha chain is a regulatory subunit. The polypeptide is ATP synthase subunit alpha (Cyanothece sp. (strain PCC 7425 / ATCC 29141)).